The following is a 646-amino-acid chain: Amyloid beta A4 precursor protein-binding family B member 1-interacting protein (646 aa).

The tract at residues 82 to 141 (FATERDTSKGSVPVAPAPSKPQSNFSLPASFDSSKPATSSNSIAAPPPPPAFKPSKEEEE) is disordered. A compositionally biased stretch (polar residues) spans 101–116 (KPQSNFSLPASFDSSK). In terms of domain architecture, Ras-associating spans 162-248 (KKLVVKVEIT…NKVLFQEKKH (87 aa)). The 110-residue stretch at 292–401 (VPDLEGVLYL…WVTGIRVAKY (110 aa)) folds into the PH domain. Positions 420-646 (ASWANRTIQA…NAMQKKRTQP (227 aa)) are disordered. The segment covering 429 to 445 (ASSTASTPSPTPKAKAA) has biased composition (low complexity). Pro residues-rich tracts occupy residues 465 to 500 (LPPP…PPVP), 509 to 536 (FPPP…PPPE), 560 to 577 (LPPP…PPPA), and 584 to 598 (APPP…PAPA).

It belongs to the MRL family.

Its subcellular location is the cell membrane. It is found in the cytoplasm. The protein resides in the cytoskeleton. Appears to function in the signal transduction from Ras activation to actin cytoskeletal remodeling. The chain is Amyloid beta A4 precursor protein-binding family B member 1-interacting protein (apbb1ip) from Danio rerio (Zebrafish).